Consider the following 581-residue polypeptide: Pentatricopeptide repeat-containing protein At1g34160 (581 aa).

9 PPR repeats span residues 67 to 101 (LTND…SSSS), 108 to 142 (DALT…GLSA), 143 to 173 (DSLL…MPVR), 174 to 208 (DVAS…GIRR), 209 to 239 (SEVT…YSND), 240 to 270 (NVIV…FTGK), 272 to 306 (SVVT…GIKP), 307 to 341 (DDVS…GVER), and 342 to 372 (NMKH…MSMI). The type E motif stretch occupies residues 377–452 (LWQSLLGASE…IPGLSYIEAK (76 aa)). Residues 453–483 (GTIHEFYNSDKSHEQWREIYEKIDEIRFKIR) are type E(+) motif. Positions 484–581 (EDGYVAQTGL…DGSCSCRDFW (98 aa)) are type DYW motif.

The protein belongs to the PPR family. PCMP-H subfamily.

The protein is Pentatricopeptide repeat-containing protein At1g34160 (PCMP-H68) of Arabidopsis thaliana (Mouse-ear cress).